The following is a 578-amino-acid chain: Arginine--tRNA ligase (578 aa).

The short motif at 123-133 (PNLAKEMHVGH) is the 'HIGH' region element.

The protein belongs to the class-I aminoacyl-tRNA synthetase family. Monomer.

The protein resides in the cytoplasm. The catalysed reaction is tRNA(Arg) + L-arginine + ATP = L-arginyl-tRNA(Arg) + AMP + diphosphate. This is Arginine--tRNA ligase from Hahella chejuensis (strain KCTC 2396).